The chain runs to 654 residues: Protein SERAC1 (654 aa).

The helical transmembrane segment at Asn32 to Ala54 threads the bilayer.

It belongs to the SERAC1 family. As to expression, widely expressed, with predominant expression in skeletal muscle and brain. In the brain, highest levels are found in the frontal and occipital cortices, cerebellum and hippocampus.

Its subcellular location is the mitochondrion membrane. It is found in the endoplasmic reticulum. It localises to the mitochondrion. Functionally, facilitates the transport of serine from the cytosol to the mitochondria by interacting with and stabilizing Sideroflexin-1 (SFXN1), a mitochondrial serine transporter, playing a fundamental role in the one-carbon cycle responsible for the synthesis of nucleotides needed for mitochondrial DNA replication. Plays an important role in the phosphatidylglycerol (PG) remodeling that is essential for both mitochondrial function and intracellular cholesterol trafficking. Specifically involved in the exchange of the sn-1 acyl chain from PG 16:0/18:1(9Z) (also known as 1-hexadecanoyl-2-(9Z-octadecenoyl)-sn-glycero-3-phospho-(1'-sn-glycerol)) to PG 18:0/18:1(9Z) (also known as 1-octadecanoyl-2-(9Z-octadecenoyl)-sn-glycero-3-phospho-(1'-sn-glycerol)), a step needed in the bis(monoacylglycerol)phosphate biosynthetic pathway. May have acyltransferase activity although the mechanism for PG remodeling has not been determined. The protein is Protein SERAC1 (SERAC1) of Homo sapiens (Human).